We begin with the raw amino-acid sequence, 214 residues long: Large ribosomal subunit protein uL3 (214 aa).

The disordered stretch occupies residues Gly-131–Pro-155. Gln-153 carries the post-translational modification N5-methylglutamine.

Belongs to the universal ribosomal protein uL3 family. As to quaternary structure, part of the 50S ribosomal subunit. Forms a cluster with proteins L14 and L19. Post-translationally, methylated by PrmB.

One of the primary rRNA binding proteins, it binds directly near the 3'-end of the 23S rRNA, where it nucleates assembly of the 50S subunit. In Neisseria meningitidis serogroup C (strain 053442), this protein is Large ribosomal subunit protein uL3.